The sequence spans 180 residues: Putative pre-16S rRNA nuclease (180 aa).

Basic and acidic residues predominate over residues 1 to 12; it reads MDAQERSERPDP. The disordered stretch occupies residues 1 to 23; it reads MDAQERSERPDPATDPGRGRRLG.

This sequence belongs to the YqgF nuclease family.

The protein localises to the cytoplasm. In terms of biological role, could be a nuclease involved in processing of the 5'-end of pre-16S rRNA. The sequence is that of Putative pre-16S rRNA nuclease from Nocardia farcinica (strain IFM 10152).